Consider the following 865-residue polypeptide: Leucine--tRNA ligase (865 aa).

A 'HIGH' region motif is present at residues 36–46; sequence PYPSGKIHMGH. Positions 608-612 match the 'KMSKS' region motif; sequence KMSKS. Lysine 611 contacts ATP.

This sequence belongs to the class-I aminoacyl-tRNA synthetase family.

Its subcellular location is the cytoplasm. It carries out the reaction tRNA(Leu) + L-leucine + ATP = L-leucyl-tRNA(Leu) + AMP + diphosphate. The protein is Leucine--tRNA ligase of Wolbachia sp. subsp. Brugia malayi (strain TRS).